The primary structure comprises 60 residues: CAMPATH-1 antigen (60 aa).

The signal sequence occupies residues 1-24 (MKRFLFLLLTISLLVMVQIQTGVT). A glycan (N-linked (GlcNAc...) asparagine) is linked at asparagine 27. Serine 35 carries the GPI-anchor amidated serine lipid modification. Positions 36 to 60 (ASSNLSGGGFLFFVANAIIHLFYFS) are cleaved as a propeptide — removed in mature form. N-linked (GlcNAc...) asparagine glycosylation occurs at asparagine 39.

The protein resides in the cell membrane. In terms of biological role, may play a role in carrying and orienting carbohydrate, as well as having a more specific role. The protein is CAMPATH-1 antigen (CD52) of Macaca fascicularis (Crab-eating macaque).